A 255-amino-acid chain; its full sequence is Geranylgeranylglyceryl phosphate synthase (255 aa).

Mg(2+)-binding residues include Asp34 and Thr64. Sn-glycerol 1-phosphate is bound by residues 182–188 (YLEAGSG), 213–214 (GG), and 235–236 (GN).

The protein belongs to the GGGP/HepGP synthase family. Group II subfamily. Mg(2+) serves as cofactor.

The protein localises to the cytoplasm. The catalysed reaction is sn-glycerol 1-phosphate + (2E,6E,10E)-geranylgeranyl diphosphate = sn-3-O-(geranylgeranyl)glycerol 1-phosphate + diphosphate. The protein operates within membrane lipid metabolism; glycerophospholipid metabolism. Functionally, prenyltransferase that catalyzes the transfer of the geranylgeranyl moiety of geranylgeranyl diphosphate (GGPP) to the C3 hydroxyl of sn-glycerol-1-phosphate (G1P). This reaction is the first ether-bond-formation step in the biosynthesis of archaeal membrane lipids. The polypeptide is Geranylgeranylglyceryl phosphate synthase (Saccharolobus islandicus (strain M.16.27) (Sulfolobus islandicus)).